The sequence spans 135 residues: Small ribosomal subunit protein uS8 (135 aa).

Belongs to the universal ribosomal protein uS8 family. In terms of assembly, part of the 30S ribosomal subunit. Contacts proteins S5 and S12.

One of the primary rRNA binding proteins, it binds directly to 16S rRNA central domain where it helps coordinate assembly of the platform of the 30S subunit. This is Small ribosomal subunit protein uS8 from Cutibacterium acnes (strain DSM 16379 / KPA171202) (Propionibacterium acnes).